A 463-amino-acid polypeptide reads, in one-letter code: Chaperone SurA (463 aa).

A signal peptide spans 1–25 (MTKPFSVVLASLLAITSTISPLASA). PpiC domains follow at residues 174-276 (GSKY…KLME) and 289-388 (VTEY…QRVG). Disordered regions lie at residues 329-348 (ATAKESSEDTNSRGQGGDLG) and 434-463 (GDRADNNATAAPAKSADPALPAPPPAKPTR). Residues 439-452 (NNATAAPAKSADPA) are compositionally biased toward low complexity. The segment covering 453–463 (LPAPPPAKPTR) has biased composition (pro residues).

The protein localises to the periplasm. It catalyses the reaction [protein]-peptidylproline (omega=180) = [protein]-peptidylproline (omega=0). Its function is as follows. Chaperone involved in the correct folding and assembly of outer membrane proteins. Recognizes specific patterns of aromatic residues and the orientation of their side chains, which are found more frequently in integral outer membrane proteins. May act in both early periplasmic and late outer membrane-associated steps of protein maturation. The chain is Chaperone SurA from Xanthomonas oryzae pv. oryzae (strain MAFF 311018).